A 245-amino-acid chain; its full sequence is uncharacterized protein (245 aa).

A signal peptide spans 1–19; it reads MKLTQFISYAILSLSGVQA.

The protein resides in the secreted. This is an uncharacterized protein from Arthroderma benhamiae (strain ATCC MYA-4681 / CBS 112371) (Trichophyton mentagrophytes).